A 500-amino-acid chain; its full sequence is NAD(P)H-quinone oxidoreductase subunit 2 A, chloroplastic (500 aa).

13 helical membrane-spanning segments follow: residues 14–34, 47–67, 89–109, 114–134, 139–159, 173–193, 217–237, 285–305, 313–333, 344–364, 385–405, 408–428, and 474–494; these read LLLF…GLIL, IPWF…ALLF, IFQF…VEYI, MAIT…MFLC, FITI…LSGY, YLLM…WLYG, PGIS…LSPA, WHLL…LIAI, MLAY…IVGD, YMLF…LFGL, ALSL…AGFF, LHLF…IGLL, and MIVC…IIAI.

The protein belongs to the complex I subunit 2 family. As to quaternary structure, NDH is composed of at least 16 different subunits, 5 of which are encoded in the nucleus.

The protein resides in the plastid. The protein localises to the chloroplast thylakoid membrane. The catalysed reaction is a plastoquinone + NADH + (n+1) H(+)(in) = a plastoquinol + NAD(+) + n H(+)(out). The enzyme catalyses a plastoquinone + NADPH + (n+1) H(+)(in) = a plastoquinol + NADP(+) + n H(+)(out). NDH shuttles electrons from NAD(P)H:plastoquinone, via FMN and iron-sulfur (Fe-S) centers, to quinones in the photosynthetic chain and possibly in a chloroplast respiratory chain. The immediate electron acceptor for the enzyme in this species is believed to be plastoquinone. Couples the redox reaction to proton translocation, and thus conserves the redox energy in a proton gradient. The sequence is that of NAD(P)H-quinone oxidoreductase subunit 2 A, chloroplastic from Pelargonium hortorum (Common geranium).